The primary structure comprises 968 residues: RNA polymerase-associated protein RapA (968 aa).

One can recognise a Helicase ATP-binding domain in the interval 164 to 334 (DVGRRHAPRV…FARLRLLDPN (171 aa)). 177-184 (DEVGLGKT) lines the ATP pocket. The DEAH box signature appears at 280-283 (DEAH). Residues 490-644 (RVEWLMGYLT…TCPTGRTIYD (155 aa)) form the Helicase C-terminal domain.

It belongs to the SNF2/RAD54 helicase family. RapA subfamily. In terms of assembly, interacts with the RNAP. Has a higher affinity for the core RNAP than for the holoenzyme. Its ATPase activity is stimulated by binding to RNAP.

Transcription regulator that activates transcription by stimulating RNA polymerase (RNAP) recycling in case of stress conditions such as supercoiled DNA or high salt concentrations. Probably acts by releasing the RNAP, when it is trapped or immobilized on tightly supercoiled DNA. Does not activate transcription on linear DNA. Probably not involved in DNA repair. The chain is RNA polymerase-associated protein RapA from Enterobacter sp. (strain 638).